A 38-amino-acid chain; its full sequence is Potassium channel toxin alpha-KTx 3.17 (38 aa).

3 disulfide bridges follow: cysteine 8–cysteine 28, cysteine 14–cysteine 33, and cysteine 18–cysteine 35.

This sequence belongs to the short scorpion toxin superfamily. Potassium channel inhibitor family. Alpha-KTx 03 subfamily. As to expression, expressed by the venom gland.

Its subcellular location is the secreted. Completely inhibits the (125)I-kaliotoxin binding on rat brain synaptosomes with high-affinity (IC(50)=0.1 nM). Is a potent Kv1.3/KCNA3 ligand. This is Potassium channel toxin alpha-KTx 3.17 from Buthus paris (Scorpion).